A 252-amino-acid chain; its full sequence is Geranylgeranylglyceryl phosphate synthase (252 aa).

Mg(2+)-binding residues include D25 and S54. Residues 174–180, 205–206, and 227–228 contribute to the sn-glycerol 1-phosphate site; these read FMDAGSG, GG, and GN.

It belongs to the GGGP/HepGP synthase family. Group II subfamily. In terms of assembly, homohexamer. It depends on Mg(2+) as a cofactor.

It catalyses the reaction sn-glycerol 1-phosphate + (2E,6E,10E)-geranylgeranyl diphosphate = sn-3-O-(geranylgeranyl)glycerol 1-phosphate + diphosphate. In terms of biological role, prenyltransferase that catalyzes the transfer of the geranylgeranyl moiety of geranylgeranyl diphosphate (GGPP) to the C3 hydroxyl of sn-glycerol-1-phosphate (G1P). The chain is Geranylgeranylglyceryl phosphate synthase from Chitinophaga pinensis (strain ATCC 43595 / DSM 2588 / LMG 13176 / NBRC 15968 / NCIMB 11800 / UQM 2034).